The chain runs to 554 residues: Hydroxylamine reductase (554 aa).

[2Fe-2S] cluster contacts are provided by Cys-3, Cys-6, Cys-18, and Cys-25. Hybrid [4Fe-2O-2S] cluster-binding residues include His-252, Glu-276, Cys-320, Cys-408, Cys-436, Cys-461, Glu-495, and Lys-497. Cys-408 is modified (cysteine persulfide).

This sequence belongs to the HCP family. [2Fe-2S] cluster is required as a cofactor. It depends on hybrid [4Fe-2O-2S] cluster as a cofactor.

It is found in the cytoplasm. It catalyses the reaction A + NH4(+) + H2O = hydroxylamine + AH2 + H(+). In terms of biological role, catalyzes the reduction of hydroxylamine to form NH(3) and H(2)O. This chain is Hydroxylamine reductase, found in Shewanella oneidensis (strain ATCC 700550 / JCM 31522 / CIP 106686 / LMG 19005 / NCIMB 14063 / MR-1).